An 858-amino-acid chain; its full sequence is DNA mismatch repair protein MutS (858 aa).

613 to 620 is an ATP binding site; it reads GPNMAGKS.

It belongs to the DNA mismatch repair MutS family.

Its function is as follows. This protein is involved in the repair of mismatches in DNA. It is possible that it carries out the mismatch recognition step. This protein has a weak ATPase activity. This chain is DNA mismatch repair protein MutS, found in Dehalococcoides mccartyi (strain ATCC BAA-2266 / KCTC 15142 / 195) (Dehalococcoides ethenogenes (strain 195)).